We begin with the raw amino-acid sequence, 448 residues long: Glucose-6-phosphate isomerase (448 aa).

Glu290 (proton donor) is an active-site residue. Residues His311 and Lys425 contribute to the active site.

This sequence belongs to the GPI family.

It localises to the cytoplasm. The catalysed reaction is alpha-D-glucose 6-phosphate = beta-D-fructose 6-phosphate. The protein operates within carbohydrate biosynthesis; gluconeogenesis. Its pathway is carbohydrate degradation; glycolysis; D-glyceraldehyde 3-phosphate and glycerone phosphate from D-glucose: step 2/4. Its function is as follows. Catalyzes the reversible isomerization of glucose-6-phosphate to fructose-6-phosphate. This chain is Glucose-6-phosphate isomerase, found in Levilactobacillus brevis (strain ATCC 367 / BCRC 12310 / CIP 105137 / JCM 1170 / LMG 11437 / NCIMB 947 / NCTC 947) (Lactobacillus brevis).